A 217-amino-acid polypeptide reads, in one-letter code: 3,4-dihydroxy-2-butanone 4-phosphate synthase (217 aa).

D-ribulose 5-phosphate-binding positions include 37-38 (RE), Asp-42, 150-154 (RGGHT), and Glu-174. A Mg(2+)-binding site is contributed by Glu-38. A Mg(2+)-binding site is contributed by His-153.

The protein belongs to the DHBP synthase family. As to quaternary structure, homodimer. Requires Mg(2+) as cofactor. Mn(2+) serves as cofactor.

It carries out the reaction D-ribulose 5-phosphate = (2S)-2-hydroxy-3-oxobutyl phosphate + formate + H(+). The protein operates within cofactor biosynthesis; riboflavin biosynthesis; 2-hydroxy-3-oxobutyl phosphate from D-ribulose 5-phosphate: step 1/1. Catalyzes the conversion of D-ribulose 5-phosphate to formate and 3,4-dihydroxy-2-butanone 4-phosphate. This chain is 3,4-dihydroxy-2-butanone 4-phosphate synthase, found in Cronobacter sakazakii (strain ATCC BAA-894) (Enterobacter sakazakii).